A 125-amino-acid polypeptide reads, in one-letter code: Apolipoprotein C-IV (125 aa).

The first 27 residues, 1 to 27 (MSLLRHSLQALPALCLCVLVLACIGAC), serve as a signal peptide directing secretion.

This sequence belongs to the apolipoprotein C4 family.

It is found in the secreted. In terms of biological role, may participate in lipoprotein metabolism. In Ateles geoffroyi (Black-handed spider monkey), this protein is Apolipoprotein C-IV (APOC4).